The following is a 119-amino-acid chain: uncharacterized protein (119 aa).

Residues 86–119 are disordered; that stretch reads KKQRMKMLTEQEEEEEEEEEEPPKPKKKVINRKK. Residues 95–106 are compositionally biased toward acidic residues; that stretch reads EQEEEEEEEEEE. The span at 110 to 119 shows a compositional bias: basic residues; it reads PKKKVINRKK.

This is an uncharacterized protein from Sputnik virophage.